The following is a 266-amino-acid chain: Adaptin ear-binding coat-associated protein 2 (266 aa).

Disordered stretches follow at residues 165 to 198 (MRKKEGAAGTPRARPTSAGGLSLLPPPPGGKSST) and 245 to 266 (DFTKSTGSPSSQSQPGTGWVQF). A Phosphoserine modification is found at Ser181. 2 consecutive short sequence motifs (WXXF motif) follow at residues 243-246 (WGDF) and 263-266 (WVQF). A compositionally biased stretch (low complexity) spans 249–266 (STGSPSSQSQPGTGWVQF).

The protein belongs to the NECAP family. As to quaternary structure, interacts with AP1G1 and AP2A1 components of the adapter protein complexes AP-1 and AP-2. Interacts with the GAE domain proteins GGA1, GGA2 and GGA3. As to expression, expressed in brain, heart, kidney, liver, lung, skeletal muscles and testis (at protein level).

It localises to the cytoplasmic vesicle. Its subcellular location is the clathrin-coated vesicle membrane. The protein resides in the cell membrane. Its function is as follows. Involved in endocytosis. This chain is Adaptin ear-binding coat-associated protein 2 (Necap2), found in Mus musculus (Mouse).